A 1470-amino-acid chain; its full sequence is Isonitrile lipopeptide synthase (1470 aa).

The interval 584-603 (PEPESQEAARPTAPAPTAPA) is disordered. In terms of domain architecture, Carrier spans 974-1049 (AHDSTLERTI…ELARFLKQQE (76 aa)). An O-(pantetheine 4'-phosphoryl)serine modification is found at serine 1009. Residues 1049-1059 (EQQAHAQVQPR) show a composition bias toward low complexity. A disordered region spans residues 1049–1070 (EQQAHAQVQPRPAGPGLPPTLL).

This sequence belongs to the ATP-dependent AMP-binding enzyme family. Pantetheine 4'-phosphate is required as a cofactor.

It catalyses the reaction 2 a (3R)-3-isocyanyl-fatty acyl-[ACP] + L-lysine + ATP + 2 NADPH = an isonitrile lipopeptide + 2 holo-[ACP] + AMP + diphosphate + 2 NADP(+). It carries out the reaction 2 (3R)-3-isocyanylbutanoyl-[ACP] + L-lysine + ATP + 2 NADPH = (2S)-2,6-bis[(3R)-3-isocyanobutanamido]hexan-1-ol + 2 holo-[ACP] + AMP + diphosphate + 2 NADP(+). In terms of biological role, nonribosomal peptide synthetase (NRPS) involved in the biosynthesis of a unique class of isonitrile lipopeptides (INLPs). Catalyzes the final step in the pathway, i.e. the condensation of a (3R)-3-isocyanyl-fatty acyl-[ACP] to both amino groups of a lysine, producing isonitrile lipopeptides. Can use (3R)-3-isocyanylbutanoyl-[ACP] as substrate, leading to (2S)-2,6-bis[(3R)-3-isocyanobutanamido]hexan-1-ol. The chain is Isonitrile lipopeptide synthase from Streptomyces coeruleorubidus.